An 859-amino-acid chain; its full sequence is Envelope glycoprotein (859 aa).

Residues 1–6 constitute a propeptide that is removed on maturation; it reads MVSIAF. Residues 7-614 are Extracellular-facing; sequence YGGIPGGIST…KDLWSHIGNW (608 aa). 14 N-linked (GlcNAc...) asparagine; by host glycosylation sites follow: N40, N112, N141, N148, N186, N214, N233, N244, N340, N368, N399, N406, N411, and N422. Positions 446-466 are fusion peptide; the sequence is FGISAIVAAIVAATAIAASAT. N483 and N490 each carry an N-linked (GlcNAc...) asparagine; by host glycan. The tract at residues 498–513 is immunosuppression; it reads LIERQIKILYAMILQT. N550 and N557 each carry an N-linked (GlcNAc...) asparagine; by host glycan. 2 coiled-coil regions span residues 576-624 and 663-699; these read ILTT…SIIK and KKFH…YYKQ. The helical transmembrane segment at 615–635 threads the bilayer; sequence IPGLGASIIKYIVMFLLIYLL. Topologically, residues 636-859 are cytoplasmic; that stretch reads LTSSPKILRA…TSHVSMPQYV (224 aa). The disordered stretch occupies residues 745 to 764; that stretch reads AAINEHKNGSGGNNPHQGSL.

The mature envelope protein (Env) consists of a trimer of SU-TM heterodimers attached by noncovalent interactions or by a labile interchain disulfide bond. In terms of processing, specific enzymatic cleavages in vivo yield mature proteins. Envelope glycoproteins are synthesized as an inactive precursor that is N-glycosylated and processed likely by host cell furin or by a furin-like protease in the Golgi to yield the mature SU and TM proteins. The cleavage site between SU and TM requires the minimal sequence [KR]-X-[KR]-R.

It is found in the virion membrane. Its subcellular location is the host cell membrane. Functionally, the surface protein (SU) attaches the virus to the host cell by binding to its receptor. This interaction triggers the refolding of the transmembrane protein (TM) and is thought to activate its fusogenic potential by unmasking its fusion peptide. Fusion occurs at the host cell plasma membrane. In terms of biological role, the transmembrane protein (TM) acts as a class I viral fusion protein. Under the current model, the protein has at least 3 conformational states: pre-fusion native state, pre-hairpin intermediate state, and post-fusion hairpin state. During viral and target cell membrane fusion, the coiled coil regions (heptad repeats) assume a trimer-of-hairpins structure, positioning the fusion peptide in close proximity to the C-terminal region of the ectodomain. The formation of this structure appears to drive apposition and subsequent fusion of viral and target cell membranes. Membranes fusion leads to delivery of the nucleocapsid into the cytoplasm. This Equus asinus (Donkey) protein is Envelope glycoprotein (env).